The sequence spans 223 residues: MKIAILGGTGDQGFGLALRLAKNNKIIIGSRKKEKAEEAAKKAKEILKQRGIEADIIGLENKDAAKEGDVVILSLPYEYTLSTIKQLKEELKGKIVVSIGVPLATAIGDKPTRLLFPPDGSVAEMVQNVLKESKVVSAFQNVCHAVLEDLDNPVDCDILVCGNDEEAKKVVIDLANQIDGVRAIDCGNLEKSRIIEAITPLLIGLNIKYKSKGTGIRITNLEI.

Residues 9–12 (TGDQ), 30–31 (SR), Lys35, Leu75, and Val101 each bind NADP(+).

This sequence belongs to the F420-dependent NADP reductase family.

The catalysed reaction is reduced coenzyme F420-(gamma-L-Glu)(n) + NADP(+) = oxidized coenzyme F420-(gamma-L-Glu)(n) + NADPH + 2 H(+). Functionally, catalyzes the reduction of NADP(+) with F420H(2) via hydride transfer, and the reverse reaction, i.e. the reduction of F420 with NADPH. Probably functions in the regeneration of NADPH required in biosynthetic reactions. The protein is F420-dependent NADP reductase (fno) of Methanocaldococcus jannaschii (strain ATCC 43067 / DSM 2661 / JAL-1 / JCM 10045 / NBRC 100440) (Methanococcus jannaschii).